A 183-amino-acid chain; its full sequence is MMPRRDVLFLSLLLVIATVSAVALADDEADCVYTFFLRTGSTFKAGTDSIISARVYDKYGDYIGIRNLEAWGGLMGPGYNYYERGNLDIFSGKAPCLPSPVCSLNLTSDGSGDHHGWYVNYVEVTTAGVHAKCSYQSFDVEQWLASDTSPYELSAVRNNCPVSLRESVGRVGSEIRKTLSWIV.

An N-terminal signal peptide occupies residues 1–25; that stretch reads MMPRRDVLFLSLLLVIATVSAVALA. Residues 31–158 enclose the PLAT domain; sequence CVYTFFLRTG…SPYELSAVRN (128 aa).

Its subcellular location is the endoplasmic reticulum. In terms of biological role, involved in response to abiotic stress. The chain is PLAT domain-containing protein 2 from Arabidopsis thaliana (Mouse-ear cress).